We begin with the raw amino-acid sequence, 159 residues long: Probable histone H2A.5 (159 aa).

The span at 1 to 10 shows a compositional bias: gly residues; the sequence is MDAAGAGAGG. Disordered regions lie at residues 1–29 and 136–159; these read MDAA…KKAV and EKAA…PKKA. 2 stretches are compositionally biased toward basic residues: residues 11–29 and 148–159; these read KLKK…KKAV and PKKAAGKSPKKA. 2 consecutive short sequence motifs (SPKK motif) follow at residues 147–150 and 155–158; these read SPKK.

Belongs to the histone H2A family. As to quaternary structure, the nucleosome is a histone octamer containing two molecules each of H2A, H2B, H3 and H4 assembled in one H3-H4 heterotetramer and two H2A-H2B heterodimers. The octamer wraps approximately 147 bp of DNA.

The protein localises to the nucleus. Its subcellular location is the chromosome. Functionally, core component of nucleosome. Nucleosomes wrap and compact DNA into chromatin, limiting DNA accessibility to the cellular machineries which require DNA as a template. Histones thereby play a central role in transcription regulation, DNA repair, DNA replication and chromosomal stability. DNA accessibility is regulated via a complex set of post-translational modifications of histones, also called histone code, and nucleosome remodeling. This chain is Probable histone H2A.5, found in Oryza sativa subsp. indica (Rice).